Consider the following 427-residue polypeptide: Glutamate-1-semialdehyde 2,1-aminomutase (427 aa).

Lys265 carries the N6-(pyridoxal phosphate)lysine modification.

Belongs to the class-III pyridoxal-phosphate-dependent aminotransferase family. HemL subfamily. As to quaternary structure, homodimer. Pyridoxal 5'-phosphate is required as a cofactor.

Its subcellular location is the cytoplasm. The enzyme catalyses (S)-4-amino-5-oxopentanoate = 5-aminolevulinate. The protein operates within porphyrin-containing compound metabolism; protoporphyrin-IX biosynthesis; 5-aminolevulinate from L-glutamyl-tRNA(Glu): step 2/2. The protein is Glutamate-1-semialdehyde 2,1-aminomutase of Marinomonas sp. (strain MWYL1).